A 459-amino-acid polypeptide reads, in one-letter code: tRNA(Ile2) 2-agmatinylcytidine synthetase TiaS (459 aa).

A DNA-binding region (OB) is located at residues 282–360 (VRVRVWVASI…TINLEKLHII (79 aa)).

Belongs to the TiaS family.

It is found in the cytoplasm. It carries out the reaction cytidine(34) in tRNA(Ile2) + agmatine + ATP + H2O = 2-agmatinylcytidine(34) in tRNA(Ile2) + AMP + 2 phosphate + 2 H(+). Its function is as follows. ATP-dependent agmatine transferase that catalyzes the formation of 2-agmatinylcytidine (agm2C) at the wobble position (C34) of tRNA(Ile2), converting the codon specificity from AUG to AUA. In Staphylothermus marinus (strain ATCC 43588 / DSM 3639 / JCM 9404 / F1), this protein is tRNA(Ile2) 2-agmatinylcytidine synthetase TiaS.